Consider the following 137-residue polypeptide: Basic phospholipase A2 homolog 4a (137 aa).

An N-terminal signal peptide occupies residues 1–16 (MRTLWIVTVLLVGVEG). Disulfide bonds link Cys42–Cys131, Cys44–Cys60, Cys59–Cys111, Cys65–Cys137, Cys66–Cys104, Cys73–Cys97, and Cys91–Cys102. An important for membrane-damaging activities in eukaryotes and bacteria; heparin-binding region spans residues 121 to 133 (KKYKIYPKFFCKK).

It belongs to the phospholipase A2 family. Group II subfamily. K49 sub-subfamily. As to quaternary structure, homodimer; non-covalently linked. In terms of tissue distribution, expressed by the venom gland.

It localises to the secreted. In terms of biological role, snake venom phospholipase A2 homolog that lacks enzymatic activity. Is myotoxic and displays edema-inducing activities. A model of myotoxic mechanism has been proposed: an apo Lys49-PLA2 is activated by the entrance of a hydrophobic molecule (e.g. fatty acid) at the hydrophobic channel of the protein leading to a reorientation of a monomer. This reorientation causes a transition between 'inactive' to 'active' states, causing alignment of C-terminal and membrane-docking sites (MDoS) side-by-side and putting the membrane-disruption sites (MDiS) in the same plane, exposed to solvent and in a symmetric position for both monomers. The MDoS region stabilizes the toxin on membrane by the interaction of charged residues with phospholipid head groups. Subsequently, the MDiS region destabilizes the membrane with penetration of hydrophobic residues. This insertion causes a disorganization of the membrane, allowing an uncontrolled influx of ions (i.e. calcium and sodium), and eventually triggering irreversible intracellular alterations and cell death. This is Basic phospholipase A2 homolog 4a from Bothrops asper (Terciopelo).